Reading from the N-terminus, the 274-residue chain is Large ribosomal subunit protein uL2cz/uL2cy (274 aa).

The interval 225 to 274 (PVDHPHGGGEGRAPIGRKKPVTPWGYPALGRRSRKRKKYSDNLILRRRTK) is disordered.

It belongs to the universal ribosomal protein uL2 family. Part of the 50S ribosomal subunit.

Its subcellular location is the plastid. The protein resides in the chloroplast. This Lotus japonicus (Lotus corniculatus var. japonicus) protein is Large ribosomal subunit protein uL2cz/uL2cy (rpl2-A).